The chain runs to 403 residues: Rhomboid-like protein 15 (403 aa).

Transmembrane regions (helical) follow at residues 22–42 (IPFLTSSVVVVCGVIYLICLL), 70–90 (AIIFHGSLLHVLFNMMALVPM), 103–123 (LLYLTVLLATTNAVLHLLIAS), 141–161 (AIGFSGILFSMIVIETSLSGV), and 176–196 (LYPWILLIVFQLLMTNVSLLG). The active-site Nucleophile is Ser-145. The Charge relay system role is filled by His-197. The helical transmembrane segment at 198–218 (LCGILSGFSYSYGLFNFLMPG) threads the bilayer. The interval 282-316 (EASNQSSEDSRFPGRGRTLSTARDPTAPAGETDPN) is disordered. The UBA domain occupies 361–401 (AASEEQIQKLVAMGFDRTQVEVALAAADDDLTVAVEILMSQ).

Belongs to the peptidase S54 family.

The protein resides in the membrane. Functionally, probable rhomboid-type serine protease that catalyzes intramembrane proteolysis. May function in senescence. The chain is Rhomboid-like protein 15 from Arabidopsis thaliana (Mouse-ear cress).